A 178-amino-acid polypeptide reads, in one-letter code: ATP synthase subunit delta (178 aa).

The protein belongs to the ATPase delta chain family. As to quaternary structure, F-type ATPases have 2 components, F(1) - the catalytic core - and F(0) - the membrane proton channel. F(1) has five subunits: alpha(3), beta(3), gamma(1), delta(1), epsilon(1). F(0) has three main subunits: a(1), b(2) and c(10-14). The alpha and beta chains form an alternating ring which encloses part of the gamma chain. F(1) is attached to F(0) by a central stalk formed by the gamma and epsilon chains, while a peripheral stalk is formed by the delta and b chains.

The protein resides in the cell inner membrane. F(1)F(0) ATP synthase produces ATP from ADP in the presence of a proton or sodium gradient. F-type ATPases consist of two structural domains, F(1) containing the extramembraneous catalytic core and F(0) containing the membrane proton channel, linked together by a central stalk and a peripheral stalk. During catalysis, ATP synthesis in the catalytic domain of F(1) is coupled via a rotary mechanism of the central stalk subunits to proton translocation. Functionally, this protein is part of the stalk that links CF(0) to CF(1). It either transmits conformational changes from CF(0) to CF(1) or is implicated in proton conduction. The chain is ATP synthase subunit delta from Teredinibacter turnerae (strain ATCC 39867 / T7901).